Consider the following 456-residue polypeptide: GTP cyclohydrolase 1 (456 aa).

Residues cysteine 340, histidine 343, and cysteine 412 each coordinate Zn(2+).

The protein belongs to the GTP cyclohydrolase I family. As to quaternary structure, homodimer. As to expression, expressed in leaves and unripe fruits.

The catalysed reaction is GTP + H2O = 7,8-dihydroneopterin 3'-triphosphate + formate + H(+). Its pathway is cofactor biosynthesis; 7,8-dihydroneopterin triphosphate biosynthesis; 7,8-dihydroneopterin triphosphate from GTP: step 1/1. Its function is as follows. GTP cyclohydrolase 1 is the first enzyme in the biosynthetic pathway leading to folic acid. The polypeptide is GTP cyclohydrolase 1 (GCH1) (Solanum lycopersicum (Tomato)).